The chain runs to 68 residues: Probable tautomerase Cj0270 (68 aa).

Catalysis depends on P2, which acts as the Proton acceptor; via imino nitrogen.

This sequence belongs to the 4-oxalocrotonate tautomerase family.

The protein is Probable tautomerase Cj0270 of Campylobacter jejuni subsp. jejuni serotype O:2 (strain ATCC 700819 / NCTC 11168).